The following is a 157-amino-acid chain: Large ribosomal subunit protein uL15 (157 aa).

Belongs to the universal ribosomal protein uL15 family. Part of the 50S ribosomal subunit.

In terms of biological role, binds to the 23S rRNA. The protein is Large ribosomal subunit protein uL15 of Ehrlichia ruminantium (strain Welgevonden).